A 309-amino-acid chain; its full sequence is Homoserine O-acetyltransferase (309 aa).

Cysteine 142 serves as the catalytic Acyl-thioester intermediate. Positions 163 and 192 each coordinate substrate. Histidine 235 (proton acceptor) is an active-site residue. The active site involves glutamate 237. Arginine 249 provides a ligand contact to substrate.

The protein belongs to the MetA family.

The protein resides in the cytoplasm. The catalysed reaction is L-homoserine + acetyl-CoA = O-acetyl-L-homoserine + CoA. Its pathway is amino-acid biosynthesis; L-methionine biosynthesis via de novo pathway; O-acetyl-L-homoserine from L-homoserine: step 1/1. In terms of biological role, transfers an acetyl group from acetyl-CoA to L-homoserine, forming acetyl-L-homoserine. This chain is Homoserine O-acetyltransferase, found in Methanomethylophilus alvi (strain Mx1201).